We begin with the raw amino-acid sequence, 672 residues long: Prion-like-(Q/N-rich) domain-bearing protein 25 (672 aa).

The helical transmembrane segment at 26–46 threads the bilayer; sequence VPPPIMICLFFLLLQIFVISV.

It is found in the membrane. This is Prion-like-(Q/N-rich) domain-bearing protein 25 (pqn-25) from Caenorhabditis elegans.